Here is a 327-residue protein sequence, read N- to C-terminus: tRNA-modifying protein YgfZ (327 aa).

Folate is bound by residues Trp-27 and Trp-189.

This sequence belongs to the tRNA-modifying YgfZ family.

It localises to the cytoplasm. Functionally, folate-binding protein involved in regulating the level of ATP-DnaA and in the modification of some tRNAs. It is probably a key factor in regulatory networks that act via tRNA modification, such as initiation of chromosomal replication. This is tRNA-modifying protein YgfZ from Klebsiella pneumoniae (strain 342).